Here is a 198-residue protein sequence, read N- to C-terminus: Glycerol-3-phosphate acyltransferase (198 aa).

The next 5 membrane-spanning stretches (helical) occupy residues 6–26 (FLPV…GLIL), 55–75 (GLAA…VIIS), 83–103 (AAMI…WLKF), 113–133 (IGIL…VWLA), and 154–174 (IVLW…LTLL).

It belongs to the PlsY family. In terms of assembly, probably interacts with PlsX.

The protein resides in the cell inner membrane. It carries out the reaction an acyl phosphate + sn-glycerol 3-phosphate = a 1-acyl-sn-glycero-3-phosphate + phosphate. It functions in the pathway lipid metabolism; phospholipid metabolism. Functionally, catalyzes the transfer of an acyl group from acyl-phosphate (acyl-PO(4)) to glycerol-3-phosphate (G3P) to form lysophosphatidic acid (LPA). This enzyme utilizes acyl-phosphate as fatty acyl donor, but not acyl-CoA or acyl-ACP. This chain is Glycerol-3-phosphate acyltransferase, found in Bradyrhizobium sp. (strain BTAi1 / ATCC BAA-1182).